Reading from the N-terminus, the 392-residue chain is Glutamine synthetase (392 aa).

A GS beta-grasp domain is found at 26-106; it reads VQVTYVWIDG…VMCEVLKYNR (81 aa). In terms of domain architecture, GS catalytic spans 113–392; it reads LRHTCKKIME…MASPRDAAVF (280 aa). Glu-134 is a binding site for ATP. Residues Glu-134, Glu-136, Glu-196, and Glu-203 each coordinate Mn(2+). 203 to 208 lines the ATP pocket; that stretch reads EFQVGP. Residue 246–247 participates in L-glutamate binding; the sequence is NW. Residue His-253 coordinates Mn(2+). ATP is bound by residues 255-257, Arg-319, and Arg-324; that span reads NYS. An L-glutamate-binding site is contributed by Arg-319. 336 to 338 provides a ligand contact to ADP; the sequence is YFE. Glu-338 is a Mn(2+) binding site. Arg-340 provides a ligand contact to L-glutamate.

Belongs to the glutamine synthetase family. It depends on Mg(2+) as a cofactor. Requires Mn(2+) as cofactor.

Its subcellular location is the cytoplasm. The protein localises to the cytosol. It localises to the microsome. The protein resides in the mitochondrion. The catalysed reaction is L-glutamate + NH4(+) + ATP = L-glutamine + ADP + phosphate + H(+). Functionally, glutamine synthetase that catalyzes the ATP-dependent conversion of glutamate and ammonia to glutamine. The protein is Glutamine synthetase of Xenopus laevis (African clawed frog).